A 267-amino-acid polypeptide reads, in one-letter code: Tryptophan synthase alpha chain (267 aa).

Residues Glu43 and Asp54 each act as proton acceptor in the active site.

The protein belongs to the TrpA family. Tetramer of two alpha and two beta chains.

The enzyme catalyses (1S,2R)-1-C-(indol-3-yl)glycerol 3-phosphate + L-serine = D-glyceraldehyde 3-phosphate + L-tryptophan + H2O. The protein operates within amino-acid biosynthesis; L-tryptophan biosynthesis; L-tryptophan from chorismate: step 5/5. The alpha subunit is responsible for the aldol cleavage of indoleglycerol phosphate to indole and glyceraldehyde 3-phosphate. The chain is Tryptophan synthase alpha chain from Bacillus subtilis subsp. natto.